We begin with the raw amino-acid sequence, 79 residues long: Beta-defensin 15 (79 aa).

The N-terminal stretch at 1-20 is a signal peptide; it reads MKTFLFLFAVFFFLDPAKNA. Disulfide bonds link C26–C53, C33–C47, and C37–C54.

It belongs to the beta-defensin family.

It is found in the secreted. Its function is as follows. Has antibacterial activity. The protein is Beta-defensin 15 (Defb15) of Rattus norvegicus (Rat).